The chain runs to 296 residues: Tuberculosinyl adenosine transferase (296 aa).

It belongs to the diterpene synthase family. Homodimer. Mg(2+) is required as a cofactor.

It catalyses the reaction tuberculosinyl diphosphate + adenosine + H(+) = 1-tuberculosinyladenosine + diphosphate. The enzyme catalyses tuberculosinyl diphosphate + H2O = tuberculosinol + diphosphate. The catalysed reaction is tuberculosinyl diphosphate + H2O = (13R)-edaxadiene + diphosphate. It carries out the reaction tuberculosinyl diphosphate + H2O = (13S)-edaxadiene + diphosphate. Tuberculosinyl transferase that catalyzes the condensation of adenosine and tuberculosinyl diphosphate (TbPP) to generate 1-tuberculosinyladenosine (1-TbAd), which acts as an antiacid that directly protects M.tuberculosis from acid pH and physically remodels M.tuberculosis phagolysosomes. In addition, acts as a phosphatase that catalyzes the diphosphate-removal from TbPP to produce both tuberculosinol (TOH) and isotuberculosinol (iso-TOH). In Mycobacterium tuberculosis (strain CDC 1551 / Oshkosh), this protein is Tuberculosinyl adenosine transferase.